A 467-amino-acid chain; its full sequence is L-seryl-tRNA(Sec) selenium transferase (467 aa).

At Lys298 the chain carries N6-(pyridoxal phosphate)lysine.

It belongs to the SelA family. Pyridoxal 5'-phosphate serves as cofactor.

It localises to the cytoplasm. It carries out the reaction L-seryl-tRNA(Sec) + selenophosphate + H(+) = L-selenocysteinyl-tRNA(Sec) + phosphate. It functions in the pathway aminoacyl-tRNA biosynthesis; selenocysteinyl-tRNA(Sec) biosynthesis; selenocysteinyl-tRNA(Sec) from L-seryl-tRNA(Sec) (bacterial route): step 1/1. Its function is as follows. Converts seryl-tRNA(Sec) to selenocysteinyl-tRNA(Sec) required for selenoprotein biosynthesis. In Alkaliphilus metalliredigens (strain QYMF), this protein is L-seryl-tRNA(Sec) selenium transferase.